Here is a 237-residue protein sequence, read N- to C-terminus: LexA repressor (237 aa).

Positions 26–46 (FDEMKDALDLRSKSGIHRLIT) form a DNA-binding region, H-T-H motif. Residues serine 158 and lysine 196 each act as for autocatalytic cleavage activity in the active site.

It belongs to the peptidase S24 family. As to quaternary structure, homodimer.

The catalysed reaction is Hydrolysis of Ala-|-Gly bond in repressor LexA.. Represses a number of genes involved in the response to DNA damage (SOS response), including recA and lexA. In the presence of single-stranded DNA, RecA interacts with LexA causing an autocatalytic cleavage which disrupts the DNA-binding part of LexA, leading to derepression of the SOS regulon and eventually DNA repair. In Rhodopseudomonas palustris (strain BisB18), this protein is LexA repressor.